The primary structure comprises 371 residues: Dual-specificity RNA methyltransferase RlmN (371 aa).

The Proton acceptor role is filled by Glu-97. The region spanning 103-341 (DGDRATLCVS…VTVRTTRGDD (239 aa)) is the Radical SAM core domain. A disulfide bridge links Cys-110 with Cys-346. The [4Fe-4S] cluster site is built by Cys-117, Cys-121, and Cys-124. Residues 171–172 (GE), Ser-203, 225–227 (SLH), and Asn-303 contribute to the S-adenosyl-L-methionine site. Cys-346 (S-methylcysteine intermediate) is an active-site residue.

The protein belongs to the radical SAM superfamily. RlmN family. [4Fe-4S] cluster is required as a cofactor.

The protein resides in the cytoplasm. It carries out the reaction adenosine(2503) in 23S rRNA + 2 reduced [2Fe-2S]-[ferredoxin] + 2 S-adenosyl-L-methionine = 2-methyladenosine(2503) in 23S rRNA + 5'-deoxyadenosine + L-methionine + 2 oxidized [2Fe-2S]-[ferredoxin] + S-adenosyl-L-homocysteine. The enzyme catalyses adenosine(37) in tRNA + 2 reduced [2Fe-2S]-[ferredoxin] + 2 S-adenosyl-L-methionine = 2-methyladenosine(37) in tRNA + 5'-deoxyadenosine + L-methionine + 2 oxidized [2Fe-2S]-[ferredoxin] + S-adenosyl-L-homocysteine. In terms of biological role, specifically methylates position 2 of adenine 2503 in 23S rRNA and position 2 of adenine 37 in tRNAs. m2A2503 modification seems to play a crucial role in the proofreading step occurring at the peptidyl transferase center and thus would serve to optimize ribosomal fidelity. The sequence is that of Dual-specificity RNA methyltransferase RlmN from Marinomonas sp. (strain MWYL1).